Reading from the N-terminus, the 203-residue chain is Holliday junction branch migration complex subunit RuvA (203 aa).

Positions 1-62 are domain I; sequence MYEYFLGQVT…ENGMSLFGFF (62 aa). Residues 63–141 are domain II; it reads DADEKALFEK…DLNVDVTGQT (79 aa). The interval 142–148 is flexible linker; that stretch reads ALDVDAP. The domain III stretch occupies residues 149–203; the sequence is AVDGALADALAALEALGYSKADVKKVTKKLETFSQTQGADTNTLLSEGLRLLMKK.

It belongs to the RuvA family. In terms of assembly, homotetramer. Forms an RuvA(8)-RuvB(12)-Holliday junction (HJ) complex. HJ DNA is sandwiched between 2 RuvA tetramers; dsDNA enters through RuvA and exits via RuvB. An RuvB hexamer assembles on each DNA strand where it exits the tetramer. Each RuvB hexamer is contacted by two RuvA subunits (via domain III) on 2 adjacent RuvB subunits; this complex drives branch migration. In the full resolvosome a probable DNA-RuvA(4)-RuvB(12)-RuvC(2) complex forms which resolves the HJ.

Its subcellular location is the cytoplasm. The RuvA-RuvB-RuvC complex processes Holliday junction (HJ) DNA during genetic recombination and DNA repair, while the RuvA-RuvB complex plays an important role in the rescue of blocked DNA replication forks via replication fork reversal (RFR). RuvA specifically binds to HJ cruciform DNA, conferring on it an open structure. The RuvB hexamer acts as an ATP-dependent pump, pulling dsDNA into and through the RuvAB complex. HJ branch migration allows RuvC to scan DNA until it finds its consensus sequence, where it cleaves and resolves the cruciform DNA. This is Holliday junction branch migration complex subunit RuvA from Lactiplantibacillus plantarum (strain ATCC BAA-793 / NCIMB 8826 / WCFS1) (Lactobacillus plantarum).